Reading from the N-terminus, the 660-residue chain is tRNA 5-methylaminomethyl-2-thiouridine biosynthesis bifunctional protein MnmC (660 aa).

Residues 1–242 (MTDRIVPATL…KRAMLVGEFA (242 aa)) form a tRNA (mnm(5)s(2)U34)-methyltransferase region. Positions 266 to 660 (IGAGLAGCAV…VRALRHGRVA (395 aa)) are FAD-dependent cmnm(5)s(2)U34 oxidoreductase.

In the N-terminal section; belongs to the methyltransferase superfamily. tRNA (mnm(5)s(2)U34)-methyltransferase family. This sequence in the C-terminal section; belongs to the DAO family. FAD is required as a cofactor.

The protein resides in the cytoplasm. It carries out the reaction 5-aminomethyl-2-thiouridine(34) in tRNA + S-adenosyl-L-methionine = 5-methylaminomethyl-2-thiouridine(34) in tRNA + S-adenosyl-L-homocysteine + H(+). Catalyzes the last two steps in the biosynthesis of 5-methylaminomethyl-2-thiouridine (mnm(5)s(2)U) at the wobble position (U34) in tRNA. Catalyzes the FAD-dependent demodification of cmnm(5)s(2)U34 to nm(5)s(2)U34, followed by the transfer of a methyl group from S-adenosyl-L-methionine to nm(5)s(2)U34, to form mnm(5)s(2)U34. In Burkholderia mallei (strain NCTC 10247), this protein is tRNA 5-methylaminomethyl-2-thiouridine biosynthesis bifunctional protein MnmC.